The following is a 103-amino-acid chain: MSNFLFPCNSTFFSALVSNSSRPGGGGGGGNVKSTISSAFISKLLGGGGGGGRNVSSFTDDGTIGLSSSSISYPGGGGGGGGSAKSLSSSKPGGGGGSPLIFL.

The tract at residues 69-103 is disordered; it reads SSISYPGGGGGGGGSAKSLSSSKPGGGGGSPLIFL. Composition is skewed to gly residues over residues 74–83 and 92–103; these read PGGGGGGGGS and PGGGGGSPLIFL.

This is an uncharacterized protein from Saccharomyces cerevisiae (strain ATCC 204508 / S288c) (Baker's yeast).